We begin with the raw amino-acid sequence, 124 residues long: Small ribosomal subunit protein uS12 (124 aa).

The interval M1–L24 is disordered. A 3-methylthioaspartic acid modification is found at D90.

It belongs to the universal ribosomal protein uS12 family. As to quaternary structure, part of the 30S ribosomal subunit. Contacts proteins S8 and S17. May interact with IF1 in the 30S initiation complex.

With S4 and S5 plays an important role in translational accuracy. Functionally, interacts with and stabilizes bases of the 16S rRNA that are involved in tRNA selection in the A site and with the mRNA backbone. Located at the interface of the 30S and 50S subunits, it traverses the body of the 30S subunit contacting proteins on the other side and probably holding the rRNA structure together. The combined cluster of proteins S8, S12 and S17 appears to hold together the shoulder and platform of the 30S subunit. This chain is Small ribosomal subunit protein uS12, found in Anaplasma phagocytophilum (strain HZ).